A 116-amino-acid polypeptide reads, in one-letter code: Sperm mitochondrial-associated cysteine-rich protein (116 aa).

7 repeat units span residues 6–13 (KHSKCCPA), 14–21 (KGNQCCPP), 30–37 (KGNQCCPP), 38–45 (KQNQCCQP), 46–53 (KGSQCCPP), 54–61 (KHNHCCQP), and 62–68 (KPPCCIQ). The tract at residues 6 to 68 (KHSKCCPAKG…CQPKPPCCIQ (63 aa)) is 7 X 7 (OR 8) AA approximate repeats. Residues 80–116 (VSPLNMESEPNSPQTQDKGCQTQQQPHSPQNESRPSK) are disordered. The span at 93 to 104 (QTQDKGCQTQQQ) shows a compositional bias: low complexity. Positions 105–116 (PHSPQNESRPSK) are enriched in polar residues.

Testis. Is selectively expressed in the spermatids of seminiferous tubules.

It is found in the cytoplasm. The protein resides in the mitochondrion membrane. Involved in sperm motility. Its absence is associated with genetic background dependent male infertility. Infertility may be due to reduced sperm motility in the female reproductive tract and inability to penetrate the oocyte zona pellucida. The protein is Sperm mitochondrial-associated cysteine-rich protein (SMCP) of Homo sapiens (Human).